The following is a 170-amino-acid chain: Ribosome maturation factor RimM (170 aa).

In terms of domain architecture, PRC barrel spans 92–163 (KEGWYYFELE…RMDVELPPGL (72 aa)).

This sequence belongs to the RimM family. In terms of assembly, binds ribosomal protein uS19.

Its subcellular location is the cytoplasm. Functionally, an accessory protein needed during the final step in the assembly of 30S ribosomal subunit, possibly for assembly of the head region. Essential for efficient processing of 16S rRNA. May be needed both before and after RbfA during the maturation of 16S rRNA. It has affinity for free ribosomal 30S subunits but not for 70S ribosomes. The sequence is that of Ribosome maturation factor RimM from Desulfitobacterium hafniense (strain Y51).